A 314-amino-acid chain; its full sequence is tRNA pseudouridine synthase B (314 aa).

D54 acts as the Nucleophile in catalysis.

It belongs to the pseudouridine synthase TruB family. Type 1 subfamily.

The enzyme catalyses uridine(55) in tRNA = pseudouridine(55) in tRNA. Functionally, responsible for synthesis of pseudouridine from uracil-55 in the psi GC loop of transfer RNAs. This chain is tRNA pseudouridine synthase B, found in Ralstonia nicotianae (strain ATCC BAA-1114 / GMI1000) (Ralstonia solanacearum).